Here is an 89-residue protein sequence, read N- to C-terminus: MSITAERKQELITEYATKAGDTGSPEVQVAVLSERISNLTNHFKSHKKDNHSRRGLLKMVSQRRRLLDYLKEVNHSRYQVLIEKLGLRR.

Belongs to the universal ribosomal protein uS15 family. Part of the 30S ribosomal subunit. Forms a bridge to the 50S subunit in the 70S ribosome, contacting the 23S rRNA.

One of the primary rRNA binding proteins, it binds directly to 16S rRNA where it helps nucleate assembly of the platform of the 30S subunit by binding and bridging several RNA helices of the 16S rRNA. Its function is as follows. Forms an intersubunit bridge (bridge B4) with the 23S rRNA of the 50S subunit in the ribosome. This is Small ribosomal subunit protein uS15 from Bartonella bacilliformis (strain ATCC 35685 / KC583 / Herrer 020/F12,63).